Here is a 177-residue protein sequence, read N- to C-terminus: Large ribosomal subunit protein uL6 (177 aa).

The protein belongs to the universal ribosomal protein uL6 family. In terms of assembly, part of the 50S ribosomal subunit.

Functionally, this protein binds to the 23S rRNA, and is important in its secondary structure. It is located near the subunit interface in the base of the L7/L12 stalk, and near the tRNA binding site of the peptidyltransferase center. In Methylobacillus flagellatus (strain ATCC 51484 / DSM 6875 / VKM B-1610 / KT), this protein is Large ribosomal subunit protein uL6.